The sequence spans 257 residues: ABC transporter ATP-binding protein YxdL (257 aa).

The ABC transporter domain maps to 5–243 (LEVKHINKTY…FYEQILDVLS (239 aa)). Residue 40–47 (GPSGSGKT) coordinates ATP.

It belongs to the ABC transporter superfamily. As to quaternary structure, the complex is composed of two ATP-binding proteins (YxdL) and two transmembrane proteins (YxdM).

In terms of biological role, part of the ABC transporter complex YxdLM which could be involved in peptide resistance. Responsible for energy coupling to the transport system. The sequence is that of ABC transporter ATP-binding protein YxdL (yxdL) from Bacillus subtilis (strain 168).